The following is a 382-amino-acid chain: Protein delta homolog 2 (382 aa).

The N-terminal stretch at 1 to 26 (MPSGCRCLNLVCLLCILGATSQPARA) is a signal peptide. 4 consecutive EGF-like domains span residues 27-58 (DDCS…LHCE), 62-89 (RMPG…KFCD), 91-129 (DEHI…RGCE), and 131-172 (KAGP…AHCE). Over 27–305 (DDCSSHCDLA…RQEAGLGESS (279 aa)) the chain is Extracellular. Disulfide bonds link Cys29/Cys40, Cys33/Cys46, Cys48/Cys57, Cys66/Cys71, Cys79/Cys88, Cys95/Cys107, Cys101/Cys117, Cys119/Cys128, Cys135/Cys148, Cys142/Cys160, Cys162/Cys171, Cys178/Cys189, Cys183/Cys198, Cys200/Cys209, Cys216/Cys227, Cys221/Cys236, and Cys238/Cys247. N-linked (GlcNAc...) asparagine glycosylation occurs at Asn157. Positions 174–210 (NVDDCLMRPCANGATCIDGINRFSCLCPEGFAGRFCT) constitute an EGF-like 5; calcium-binding domain. One can recognise an EGF-like 6; calcium-binding domain in the interval 212–248 (NLDDCASRPCQRGARCRDRVHDFDCLCPSGYGGKTCE). A helical membrane pass occupies residues 306 to 326 (LVALVVFGSLTAALVLATVLL). Residues 327–382 (TLRAWRRGICPTGPCCDPAPHYAPARQDQECQVSMLPAGFPLSPDLPPEPGKTTAL) lie on the Cytoplasmic side of the membrane.

The protein localises to the membrane. Regulates adipogenesis. This chain is Protein delta homolog 2 (Dlk2), found in Rattus norvegicus (Rat).